The chain runs to 436 residues: Methanethiol oxidase (436 aa).

A signal peptide spans 1–24 (MKRREFGALAAGALAMGLPFRAFA).

The protein belongs to the selenium-binding protein family.

It is found in the periplasm. It carries out the reaction methanethiol + O2 + H2O = hydrogen sulfide + formaldehyde + H2O2 + H(+). The protein operates within organosulfur degradation. Functionally, catalyzes the oxidation of methanethiol. The polypeptide is Methanethiol oxidase (Ruegeria pomeroyi (strain ATCC 700808 / DSM 15171 / DSS-3) (Silicibacter pomeroyi)).